The sequence spans 103 residues: Phosphoribosyl-ATP pyrophosphatase (103 aa).

It belongs to the PRA-PH family.

The protein resides in the cytoplasm. It catalyses the reaction 1-(5-phospho-beta-D-ribosyl)-ATP + H2O = 1-(5-phospho-beta-D-ribosyl)-5'-AMP + diphosphate + H(+). The protein operates within amino-acid biosynthesis; L-histidine biosynthesis; L-histidine from 5-phospho-alpha-D-ribose 1-diphosphate: step 2/9. The polypeptide is Phosphoribosyl-ATP pyrophosphatase (Cereibacter sphaeroides (strain ATCC 17025 / ATH 2.4.3) (Rhodobacter sphaeroides)).